The chain runs to 349 residues: Uroporphyrinogen decarboxylase (349 aa).

Residues 23–27 (RQAGR), aspartate 71, tyrosine 148, serine 203, and histidine 317 each bind substrate.

The protein belongs to the uroporphyrinogen decarboxylase family. In terms of assembly, homodimer.

The protein localises to the cytoplasm. The enzyme catalyses uroporphyrinogen III + 4 H(+) = coproporphyrinogen III + 4 CO2. It functions in the pathway porphyrin-containing compound metabolism; protoporphyrin-IX biosynthesis; coproporphyrinogen-III from 5-aminolevulinate: step 4/4. Functionally, catalyzes the decarboxylation of four acetate groups of uroporphyrinogen-III to yield coproporphyrinogen-III. The chain is Uroporphyrinogen decarboxylase from Sorangium cellulosum (strain So ce56) (Polyangium cellulosum (strain So ce56)).